The chain runs to 296 residues: Giardin subunit alpha-4 (296 aa).

Annexin repeat units follow at residues 3-72 (ATVS…VHAW), 74-146 (SRFE…GWVK), 153-223 (KSIK…AHHW), and 226-294 (DPGQ…VFWR).

This sequence belongs to the annexin family. Giardin subunit alpha subfamily.

It is found in the cytoplasm. The protein resides in the cytoskeleton. Giardins are involved in parasite attachment to the intestinal mucosa and in the cytoskeletal disassembly and reassembly that marks the transition from infectious trophozoite to transmissible cyst. They may interact with other cytoskeletal proteins such as microtubules in the microribbons or crossbridges, to maintain the integrity of the ventral disk. This is Giardin subunit alpha-4 from Giardia intestinalis (Giardia lamblia).